The sequence spans 1095 residues: DNA-directed RNA polymerase subunit beta (1095 aa).

Residues 1069 to 1095 (DLMQDVNPRRSTPSRPTYESLGKEYEE) form a disordered region.

The protein belongs to the RNA polymerase beta chain family. As to quaternary structure, in cyanobacteria the RNAP catalytic core is composed of 2 alpha, 1 beta, 1 beta', 1 gamma and 1 omega subunit. When a sigma factor is associated with the core the holoenzyme is formed, which can initiate transcription.

It carries out the reaction RNA(n) + a ribonucleoside 5'-triphosphate = RNA(n+1) + diphosphate. DNA-dependent RNA polymerase catalyzes the transcription of DNA into RNA using the four ribonucleoside triphosphates as substrates. This is DNA-directed RNA polymerase subunit beta from Prochlorococcus marinus (strain NATL1A).